A 215-amino-acid chain; its full sequence is 7-methyl-GTP pyrophosphatase (215 aa).

Residue D79 is the Proton acceptor of the active site.

This sequence belongs to the Maf family. YceF subfamily. It depends on a divalent metal cation as a cofactor.

The protein localises to the cytoplasm. The catalysed reaction is N(7)-methyl-GTP + H2O = N(7)-methyl-GMP + diphosphate + H(+). Its function is as follows. Nucleoside triphosphate pyrophosphatase that hydrolyzes 7-methyl-GTP (m(7)GTP). May have a dual role in cell division arrest and in preventing the incorporation of modified nucleotides into cellular nucleic acids. The polypeptide is 7-methyl-GTP pyrophosphatase (Burkholderia thailandensis (strain ATCC 700388 / DSM 13276 / CCUG 48851 / CIP 106301 / E264)).